The sequence spans 930 residues: RNA-binding protein 10 (930 aa).

2 stretches are compositionally biased toward basic and acidic residues: residues 1 to 14 (MEYE…DRTG) and 21 to 45 (RSQD…RSYP). The disordered stretch occupies residues 1 to 127 (MEYERRGGRG…EDEEEEEEKA (127 aa)). The segment covering 59-70 (DSSEEQSAEDSY) has biased composition (acidic residues). Phosphoserine is present on residues Ser61 and Ser89. The span at 80–89 (RRRRRRHRHS) shows a compositional bias: basic residues. The segment covering 98-111 (RDGDYRDQDYRTEQ) has biased composition (basic and acidic residues). A compositionally biased stretch (acidic residues) spans 112–125 (GEEEEEEDEEEEEE). The RRM 1 domain maps to 129 to 209 (NIVMLRMLPQ…QKVSMHYSDP (81 aa)). The RanBP2-type zinc-finger motif lies at 212–242 (KINEDWLCNKCGVQNFKRREKCFKCGVPKSE). The RRM 2 domain maps to 300-384 (DTIILRNLNP…KTINVEFAKG (85 aa)). The residue at position 383 (Lys383) is an N6-acetyllysine. Disordered regions lie at residues 464 to 487 (GPGM…EAGA), 503 to 522 (APGL…TATN), 537 to 566 (ELQS…QYPV), 620 to 646 (EQSA…HKTK), and 712 to 753 (DLPK…EEKL). The span at 507-522 (YQQSAEGSSGQSTATN) shows a compositional bias: polar residues. Residues 540–562 (SPTQPSSSAFPPATSPTAPEAYS) show a composition bias toward low complexity. A compositionally biased stretch (basic and acidic residues) spans 623–639 (ADGHKDTGASSKEGKEK). Phosphoserine occurs at positions 718, 723, 733, 736, and 738. Residues 743 to 753 (ERGGPEREEKL) show a composition bias toward basic and acidic residues. The segment at 759–784 (LACLLCRRQFPSKEALIRHQQLSGLH) adopts a C2H2-type; atypical zinc-finger fold. A phosphoserine mark is found at Ser781, Ser797, and Ser845. The segment at 818-861 (AAERREKYGIPEPPEPKRRKYGGISTASVDFEQPTRDGLGSDNI) is disordered. In terms of domain architecture, G-patch spans 858-904 (SDNIGSRMLQAMGWKEGSGLGRKKQGIVTPIEAQTRVRGSGLGARGS). An Omega-N-methylarginine modification is found at Arg902.

Associates with the spliceosome. Component of a large chromatin remodeling complex, at least composed of MYSM1, PCAF, RBM10 and KIF11/TRIP5.

It is found in the nucleus. Its function is as follows. Binds to ssRNA containing the consensus sequence 5'-AGGUAA-3'. May be involved in post-transcriptional processing, most probably in mRNA splicing. Binds to RNA homopolymers, with a preference for poly(G) and poly(U) and little for poly(A). May bind to specific miRNA hairpins. This chain is RNA-binding protein 10, found in Mus musculus (Mouse).